Here is a 324-residue protein sequence, read N- to C-terminus: Protein SRC2 homolog (324 aa).

Residues 1–111 enclose the C2 domain; the sequence is MECRSLDLTI…LDQNKGDEEK (111 aa). Over 1–279 the chain is Cytoplasmic; it reads MECRSLDLTI…KPQKPKKHGK (279 aa). Residues 141 to 281 form a disordered region; it reads GSSSGPHAPV…QKPKKHGKAG (141 aa). Low complexity-rich tracts occupy residues 166 to 175 and 246 to 269; these read YPPGHGAPSA and PYGY…QAHG. The span at 270–279 shows a compositional bias: basic residues; that stretch reads KPQKPKKHGK. The helical; Signal-anchor transmembrane segment at 280–300 threads the bilayer; sequence AGAGMGLGLGLGAGLLGGLLV. Residues 301-324 are Lumenal-facing; it reads GEAVSDIADMGDMGDMGDMGGFDF.

In terms of assembly, interacts with RBOHF (via N-terminus).

It localises to the endoplasmic reticulum membrane. The protein localises to the protein storage vacuole membrane. Its subcellular location is the cell membrane. In terms of biological role, may act as an activator of the calcium-dependent activation of RBOHF that mediates reactive oxygen species (ROS) production and may play a role in cold responses. This chain is Protein SRC2 homolog, found in Arabidopsis thaliana (Mouse-ear cress).